The primary structure comprises 139 residues: ATP synthase epsilon chain (139 aa).

The protein belongs to the ATPase epsilon chain family. In terms of assembly, F-type ATPases have 2 components, CF(1) - the catalytic core - and CF(0) - the membrane proton channel. CF(1) has five subunits: alpha(3), beta(3), gamma(1), delta(1), epsilon(1). CF(0) has three main subunits: a, b and c.

The protein localises to the cell inner membrane. Produces ATP from ADP in the presence of a proton gradient across the membrane. The polypeptide is ATP synthase epsilon chain (Marinomonas sp. (strain MWYL1)).